A 304-amino-acid chain; its full sequence is Nod factor export ATP-binding protein I (304 aa).

Positions 6–236 (IEFDKVKKSY…EIGCDVIEIF (231 aa)) constitute an ABC transporter domain. 38–45 (GPNGAGKT) is an ATP binding site.

Belongs to the ABC transporter superfamily. Lipooligosaccharide exporter (TC 3.A.1.102) family. The complex is composed of two ATP-binding proteins (NodI) and two transmembrane proteins (NodJ).

The protein localises to the cell inner membrane. Part of the ABC transporter complex NodIJ involved in the export of the nodulation factors (Nod factors), the bacterial signal molecules that induce symbiosis and subsequent nodulation induction. Nod factors are LCO (lipo-chitin oligosaccharide), a modified beta-1,4-linked N-acetylglucosamine oligosaccharide. This subunit is responsible for energy coupling to the transport system. The sequence is that of Nod factor export ATP-binding protein I from Paraburkholderia xenovorans (strain LB400).